Reading from the N-terminus, the 321-residue chain is MKFGIEFVPNEPIEKIVKLVKLAEDVGFEYAWITDHYNNKNVYETLALIAEGTETIKLGPGVTNPYVRSPAITASAIATLDELSNGRATLGIGPGDKATFDALGIEWVKPVSTIRDAIAMMRTLLAGEKTESGAQLMGVKAVQEKIPIYMGAQGPMMLKTAGEISDGALINASNPKDFEAAVPLIKEGAEAAGKSIADIDVAAYTCCSIDEDAAAAANAAKIVVAFIAAGSPPPVFERHGLPADTGKKFGELLGKGDFGGAIGAVDDALMEAFSVVGTPDEFIPKIEALGEMGVTQYVAGSPIGPDKEKSIKLLGEVIASF.

This sequence belongs to the mer family. In terms of assembly, homotetramer.

Its subcellular location is the cytoplasm. It carries out the reaction 5-methyl-5,6,7,8-tetrahydromethanopterin + oxidized coenzyme F420-(gamma-L-Glu)(n) + H(+) = 5,10-methylenetetrahydromethanopterin + reduced coenzyme F420-(gamma-L-Glu)(n). It functions in the pathway one-carbon metabolism; methanogenesis from CO(2); methyl-coenzyme M from 5,10-methylene-5,6,7,8-tetrahydromethanopterin: step 1/2. Functionally, catalyzes the reversible reduction of methylene-H(4)MPT to methyl-H(4)MPT. The sequence is that of 5,10-methylenetetrahydromethanopterin reductase from Methanothermobacter marburgensis (strain ATCC BAA-927 / DSM 2133 / JCM 14651 / NBRC 100331 / OCM 82 / Marburg) (Methanobacterium thermoautotrophicum).